Here is a 233-residue protein sequence, read N- to C-terminus: Sugar fermentation stimulation protein homolog (233 aa).

Belongs to the SfsA family.

This Teredinibacter turnerae (strain ATCC 39867 / T7901) protein is Sugar fermentation stimulation protein homolog.